Consider the following 344-residue polypeptide: Tryptophan--tRNA ligase (344 aa).

Residues 20 to 22 (QPS) and 28 to 29 (GN) each bind ATP. The short motif at 21–29 (PSGALHLGN) is the 'HIGH' region element. Aspartate 144 is an L-tryptophan binding site. Residues 156–158 (GED), valine 197, and 206–210 (KMSKS) contribute to the ATP site. The short motif at 206–210 (KMSKS) is the 'KMSKS' region element.

Belongs to the class-I aminoacyl-tRNA synthetase family. In terms of assembly, homodimer.

It is found in the cytoplasm. The catalysed reaction is tRNA(Trp) + L-tryptophan + ATP = L-tryptophyl-tRNA(Trp) + AMP + diphosphate + H(+). In terms of biological role, catalyzes the attachment of tryptophan to tRNA(Trp). The polypeptide is Tryptophan--tRNA ligase (Caulobacter vibrioides (strain ATCC 19089 / CIP 103742 / CB 15) (Caulobacter crescentus)).